We begin with the raw amino-acid sequence, 623 residues long: Glutamyl-tRNA(Gln) amidotransferase subunit E (623 aa).

The protein belongs to the GatB/GatE family. GatE subfamily. In terms of assembly, heterodimer of GatD and GatE.

The enzyme catalyses L-glutamyl-tRNA(Gln) + L-glutamine + ATP + H2O = L-glutaminyl-tRNA(Gln) + L-glutamate + ADP + phosphate + H(+). Its function is as follows. Allows the formation of correctly charged Gln-tRNA(Gln) through the transamidation of misacylated Glu-tRNA(Gln) in organisms which lack glutaminyl-tRNA synthetase. The reaction takes place in the presence of glutamine and ATP through an activated gamma-phospho-Glu-tRNA(Gln). The GatDE system is specific for glutamate and does not act on aspartate. The sequence is that of Glutamyl-tRNA(Gln) amidotransferase subunit E from Haloarcula marismortui (strain ATCC 43049 / DSM 3752 / JCM 8966 / VKM B-1809) (Halobacterium marismortui).